Consider the following 88-residue polypeptide: HssA/B-like protein 11 (88 aa).

Belongs to the hssA/B family.

This chain is HssA/B-like protein 11 (hssl11), found in Dictyostelium discoideum (Social amoeba).